Reading from the N-terminus, the 925-residue chain is Collagen alpha-2(I) chain (925 aa).

A disordered region spans residues 1 to 925 (SGGFDFSFLP…FGYEGDFYRA (925 aa)). 2 positions are modified to 4-hydroxyproline: proline 10 and proline 13. Gly residues predominate over residues 22–34 (RYYGVGLGPGPMG). Positions 35–74 (LMGPRGPPGASGAPGPQGFQGPAGEPGEPGQTGPAGARGP) are enriched in low complexity. Proline 42 and proline 48 each carry 4-hydroxyproline. Lysine 103 carries the post-translational modification 5-hydroxylysine; alternate. O-linked (Gal...) hydroxylysine; alternate glycosylation occurs at lysine 103. A compositionally biased stretch (low complexity) spans 154-171 (DGSVGPVGPAGPIGSAGP). The span at 271 to 280 (GESGGKGEPG) shows a compositional bias: gly residues. A compositionally biased stretch (low complexity) spans 281–291 (SAGPQGPPGSS). The segment covering 306–315 (GLRGGPGSRG) has biased composition (gly residues). 4-hydroxyproline is present on residues proline 317, proline 332, and proline 335. Over residues 363 to 379 (IDGRPGPIGPAGARGEA) the composition is skewed to low complexity. A compositionally biased stretch (gly residues) spans 423–432 (GVQGGKGEQG). Composition is skewed to low complexity over residues 479 to 496 (PGES…SRGP) and 508 to 518 (EPGVVGAPGTA). Over residues 519–528 (GPAGSGGLPG) the composition is skewed to gly residues. Low complexity-rich tracts occupy residues 551 to 595 (VGTT…PRGS) and 602 to 622 (VGPA…QPGA). Positions 623–632 (KGERGTKGPK) are enriched in basic and acidic residues. Over residues 640–650 (PTGPVGSAGPA) the composition is skewed to low complexity. The span at 660 to 669 (GSRGDGGPPG) shows a compositional bias: gly residues. Residues 671-680 (TGFPGAAGRT) are compositionally biased toward low complexity. A compositionally biased stretch (gly residues) spans 696–718 (GAAGKGDQGPVGRGETGAGGPPG). Low complexity-rich tracts occupy residues 719–753 (FTGE…LGLP) and 761–771 (LPGVAGAVGEP). Residues 772 to 782 (GPLGIGPPGAR) are compositionally biased toward gly residues. Low complexity predominate over residues 791–806 (EPGPVGSVGPVGALGP). A compositionally biased stretch (basic and acidic residues) spans 816 to 827 (RGDKGEPGEKGP). Pro residues predominate over residues 897–907 (PAGPPGPPGPP).

It belongs to the fibrillar collagen family. In terms of assembly, trimers of one alpha 2(I) and two alpha 1(I) chains. Interacts (via C-terminus) with TMEM131 (via PapD-L domain); the interaction is direct and is involved in assembly and TRAPPIII ER-to-Golgi transport complex-dependent secretion of collagen. Prolines at the third position of the tripeptide repeating unit (G-X-Y) are hydroxylated in some or all of the chains. As to expression, expressed in bones.

Its subcellular location is the secreted. It localises to the extracellular space. It is found in the extracellular matrix. Its function is as follows. Type I collagen is a member of group I collagen (fibrillar forming collagen). The sequence is that of Collagen alpha-2(I) chain from Acratocnus sp. (strain SLP-2019) (Ground sloth).